A 49-amino-acid polypeptide reads, in one-letter code: SPbeta prophage-derived uncharacterized protein YorN (49 aa).

In Bacillus subtilis (strain 168), this protein is SPbeta prophage-derived uncharacterized protein YorN (yorN).